The sequence spans 340 residues: MKAAVVTKDHRVSIEEKRLRELKPGEALVKTEYCGVCHTDLHVKNADFGDVTGVTLGHEGIGRVIEVADNVDSLKVGDRVSIAWMYAACGNCEYCTTGRETLCRDVLNAGYTVDGAMAEEVIVDANYAVKVPENLDPAAASSITCAGVTTYKAVKVSGIEPGQWLGVFGVGGLGNLALQYAKNVMGAKVVAFDINDDKLNFAKELGADAIINSTNVDPIEEVNRLTNNKGLDATVITAVAKTPFNQAVDVVKAGARVVAVGLPVDKMDLDIPRLVLDGIEVVGSLVGTRQDLREAFQFAAENKVIPKVQLRQLSEINDIFDEMEKGTITGRMVIDMKSSH.

Zn(2+)-binding residues include Cys37, His58, Cys89, Cys92, Cys95, Cys103, and Cys145.

The protein belongs to the zinc-containing alcohol dehydrogenase family. The cofactor is Zn(2+).

The enzyme catalyses a primary alcohol + NAD(+) = an aldehyde + NADH + H(+). It carries out the reaction a secondary alcohol + NAD(+) = a ketone + NADH + H(+). This is Alcohol dehydrogenase (adh) from Staphylococcus epidermidis (strain ATCC 35984 / DSM 28319 / BCRC 17069 / CCUG 31568 / BM 3577 / RP62A).